The sequence spans 411 residues: Tubulin beta-2 chain (411 aa).

The GTP site is built by E37, S106, G110, T111, G112, N172, and N194. A Mg(2+)-binding site is contributed by E37. A disordered region spans residues 392–411 (QYQDATAEPEGXYEEDYDEA). The segment covering 402 to 411 (GXYEEDYDEA) has biased composition (acidic residues).

This sequence belongs to the tubulin family. As to quaternary structure, dimer of alpha and beta chains. A typical microtubule is a hollow water-filled tube with an outer diameter of 25 nm and an inner diameter of 15 nM. Alpha-beta heterodimers associate head-to-tail to form protofilaments running lengthwise along the microtubule wall with the beta-tubulin subunit facing the microtubule plus end conferring a structural polarity. Microtubules usually have 13 protofilaments but different protofilament numbers can be found in some organisms and specialized cells. Mg(2+) is required as a cofactor.

It is found in the cytoplasm. It localises to the cytoskeleton. Its function is as follows. Tubulin is the major constituent of microtubules, a cylinder consisting of laterally associated linear protofilaments composed of alpha- and beta-tubulin heterodimers. Microtubules grow by the addition of GTP-tubulin dimers to the microtubule end, where a stabilizing cap forms. Below the cap, tubulin dimers are in GDP-bound state, owing to GTPase activity of alpha-tubulin. The polypeptide is Tubulin beta-2 chain (TUBB2) (Anemia phyllitidis (Fern)).